The primary structure comprises 228 residues: Cytochrome c biogenesis ATP-binding export protein CcmA (228 aa).

One can recognise an ABC transporter domain in the interval 2–227 (LSIERLGVGR…LHLERSGAWL (226 aa)). Position 34 to 41 (34 to 41 (GANGSGKT)) interacts with ATP. The tract at residues 106–126 (GAPDGTSSVPASGRSGVAAPP) is disordered.

Belongs to the ABC transporter superfamily. CcmA exporter (TC 3.A.1.107) family. In terms of assembly, the complex is composed of two ATP-binding proteins (CcmA) and two transmembrane proteins (CcmB).

The protein localises to the cell inner membrane. The catalysed reaction is heme b(in) + ATP + H2O = heme b(out) + ADP + phosphate + H(+). Its function is as follows. Part of the ABC transporter complex CcmAB involved in the biogenesis of c-type cytochromes; once thought to export heme, this seems not to be the case, but its exact role is uncertain. Responsible for energy coupling to the transport system. The sequence is that of Cytochrome c biogenesis ATP-binding export protein CcmA from Paraburkholderia xenovorans (strain LB400).